A 143-amino-acid polypeptide reads, in one-letter code: FAD synthase (143 aa).

Residues 11-12 (TF), 16-19 (HPGH), and Asp94 contribute to the ATP site.

It belongs to the archaeal FAD synthase family. Homodimer. The cofactor is a divalent metal cation.

The enzyme catalyses FMN + ATP + H(+) = FAD + diphosphate. It participates in cofactor biosynthesis; FAD biosynthesis; FAD from FMN: step 1/1. Catalyzes the transfer of the AMP portion of ATP to flavin mononucleotide (FMN) to produce flavin adenine dinucleotide (FAD) coenzyme. This is FAD synthase from Halomicrobium mukohataei (strain ATCC 700874 / DSM 12286 / JCM 9738 / NCIMB 13541) (Haloarcula mukohataei).